Here is a 587-residue protein sequence, read N- to C-terminus: Succinate dehydrogenase flavoprotein subunit (587 aa).

Residues 15–20 (GAGGAG), 39–54 (SKVFPTRSHTVSAQGG), and D223 each bind FAD. At H47 the chain carries Tele-8alpha-FAD histidine. 2 residues coordinate substrate: H244 and T256. R288 functions as the Proton acceptor in the catalytic mechanism. H355 lines the substrate pocket. E389 is an FAD binding site. R400 is a substrate binding site. 405–406 (SL) lines the FAD pocket.

The protein belongs to the FAD-dependent oxidoreductase 2 family. FRD/SDH subfamily. In terms of assembly, part of an enzyme complex containing four subunits: a flavoprotein, an iron-sulfur protein, cytochrome b-556 and a hydrophobic protein. It depends on FAD as a cofactor.

Its subcellular location is the cell inner membrane. It carries out the reaction a quinone + succinate = fumarate + a quinol. The protein operates within carbohydrate metabolism; tricarboxylic acid cycle; fumarate from succinate (bacterial route): step 1/1. The sequence is that of Succinate dehydrogenase flavoprotein subunit (sdhA) from Coxiella burnetii (strain RSA 493 / Nine Mile phase I).